The sequence spans 201 residues: Inosine triphosphate pyrophosphatase (201 aa).

T16–K21 is a binding site for ITP. E44 contacts Mg(2+). Residues K56, D72–T73, K89, F148–D151, K171, and H176–R177 contribute to the ITP site.

Belongs to the HAM1 NTPase family. In terms of assembly, homodimer. Mg(2+) is required as a cofactor. Requires Mn(2+) as cofactor.

The protein resides in the cytoplasm. It catalyses the reaction ITP + H2O = IMP + diphosphate + H(+). The catalysed reaction is dITP + H2O = dIMP + diphosphate + H(+). The enzyme catalyses XTP + H2O = XMP + diphosphate + H(+). Pyrophosphatase that hydrolyzes non-canonical purine nucleotides such as inosine triphosphate (ITP), deoxyinosine triphosphate (dITP) or xanthosine 5'-triphosphate (XTP) to their respective monophosphate derivatives. The enzyme does not distinguish between the deoxy- and ribose forms. Probably excludes non-canonical purines from RNA and DNA precursor pools, thus preventing their incorporation into RNA and DNA and avoiding chromosomal lesions. The polypeptide is Inosine triphosphate pyrophosphatase (Sorghum bicolor (Sorghum)).